We begin with the raw amino-acid sequence, 256 residues long: Expansin-like B1 (256 aa).

The signal sequence occupies residues 1–24; sequence MAQLLRRHLPVILSLILFLSKATA. Residue N27 is glycosylated (N-linked (GlcNAc...) asparagine). The 105-residue stretch at 46-150 folds into the Expansin-like EG45 domain; the sequence is NGACEYGAFG…RRVSCTYPNK (105 aa). Residues 164–249 form the Expansin-like CBD domain; it reads NYLEFEIWYQ…NWTAGATYDS (86 aa). 2 N-linked (GlcNAc...) asparagine glycosylation sites follow: N189 and N240.

Belongs to the expansin family. Expansin-like B subfamily.

It is found in the secreted. This is Expansin-like B1 (EXLB1) from Oryza sativa subsp. japonica (Rice).